We begin with the raw amino-acid sequence, 81 residues long: uncharacterized protein (81 aa).

The tract at residues 46–81 is disordered; the sequence is ASSPVVKRKSLVKRKSPVKRSPLKKRSQMRTSPCEA. The span at 51 to 73 shows a compositional bias: basic residues; that stretch reads VKRKSLVKRKSPVKRSPLKKRSQ.

This is an uncharacterized protein from Frog virus 3 (isolate Goorha) (FV-3).